The primary structure comprises 181 residues: Protein Syd (181 aa).

Belongs to the Syd family.

The protein resides in the cell inner membrane. Functionally, interacts with the SecY protein in vivo. May bind preferentially to an uncomplexed state of SecY, thus functioning either as a chelating agent for excess SecY in the cell or as a regulatory factor that negatively controls the translocase function. The polypeptide is Protein Syd (Escherichia coli O17:K52:H18 (strain UMN026 / ExPEC)).